Reading from the N-terminus, the 293-residue chain is 4-diphosphocytidyl-2-C-methyl-D-erythritol kinase (293 aa).

Lys-16 is a catalytic residue. Pro-99–Ser-109 serves as a coordination point for ATP. The active site involves Asp-141.

Belongs to the GHMP kinase family. IspE subfamily.

It catalyses the reaction 4-CDP-2-C-methyl-D-erythritol + ATP = 4-CDP-2-C-methyl-D-erythritol 2-phosphate + ADP + H(+). Its pathway is isoprenoid biosynthesis; isopentenyl diphosphate biosynthesis via DXP pathway; isopentenyl diphosphate from 1-deoxy-D-xylulose 5-phosphate: step 3/6. Functionally, catalyzes the phosphorylation of the position 2 hydroxy group of 4-diphosphocytidyl-2C-methyl-D-erythritol. The chain is 4-diphosphocytidyl-2-C-methyl-D-erythritol kinase from Paraburkholderia phymatum (strain DSM 17167 / CIP 108236 / LMG 21445 / STM815) (Burkholderia phymatum).